A 128-amino-acid polypeptide reads, in one-letter code: uncharacterized protein (128 aa).

Transmembrane regions (helical) follow at residues 1–21, 51–71, and 76–96; these read MLVF…LIFL, VRVE…AILG, and ANFL…VYYV.

The protein resides in the membrane. This is an uncharacterized protein from Saccharomyces cerevisiae (strain ATCC 204508 / S288c) (Baker's yeast).